The sequence spans 77 residues: uncharacterized protein (77 aa).

The region spanning 1–77 is the Peptidase A1 domain; the sequence is MAFERQGKIE…VAILDGKLVW (77 aa).

This is an uncharacterized protein from Saccharomyces cerevisiae (strain ATCC 204508 / S288c) (Baker's yeast).